We begin with the raw amino-acid sequence, 473 residues long: Endoglucanase B (473 aa).

An N-terminal signal peptide occupies residues 1–17 (MKFLNTFSLLSLAIIGS). A catalytic region spans residues 18–367 (KAMKNISSKE…GLIKGLGNSI (350 aa)). Glu-173 functions as the Proton donor in the catalytic mechanism. Glu-295 (nucleophile) is an active-site residue. A linker region spans residues 365–387 (NSIKTRTTIRRTTTTTTSQSQPT). CBM10 domains lie at 391-427 (SCFS…CGIK) and 436-473 (ICWS…CGIY).

The protein belongs to the glycosyl hydrolase 5 (cellulase A) family.

It carries out the reaction Endohydrolysis of (1-&gt;4)-beta-D-glucosidic linkages in cellulose, lichenin and cereal beta-D-glucans.. Its function is as follows. Rate of hydrolysis of cellulo-oligosaccharides increased with increasing chain length from cellotriose to cellopentaose. The polypeptide is Endoglucanase B (CELB) (Neocallimastix patriciarum (Rumen fungus)).